The primary structure comprises 376 residues: Protein RecA (376 aa).

Residue 79–86 coordinates ATP; sequence GPESSGKT. Positions 357 to 376 are disordered; sequence AAARAATDKPVETKGANAAA.

Belongs to the RecA family.

The protein resides in the cytoplasm. Functionally, can catalyze the hydrolysis of ATP in the presence of single-stranded DNA, the ATP-dependent uptake of single-stranded DNA by duplex DNA, and the ATP-dependent hybridization of homologous single-stranded DNAs. It interacts with LexA causing its activation and leading to its autocatalytic cleavage. The polypeptide is Protein RecA (Synechococcus sp. (strain CC9902)).